Consider the following 449-residue polypeptide: Elongation factor 1-alpha (449 aa).

The region spanning K5 to S230 is the tr-type G domain. Positions G14–S21 are G1. G14–S21 lines the GTP pocket. At K55 the chain carries N6,N6-dimethyllysine. A G2 region spans residues G70–D74. At K79 the chain carries N6,N6,N6-trimethyllysine. The interval D91–G94 is G3. Residues D91–H95 and N153–D156 contribute to the GTP site. The G4 stretch occupies residues N153–D156. The residue at position 187 (K187) is an N6,N6,N6-trimethyllysine. The interval S194–F196 is G5. The residue at position 261 (K261) is an N6-methyllysine. Residue E289 is modified to 5-glutamyl glycerylphosphorylethanolamine. K306 bears the N6,N6,N6-trimethyllysine mark. E362 carries the post-translational modification 5-glutamyl glycerylphosphorylethanolamine. At K396 the chain carries N6,N6,N6-trimethyllysine.

Belongs to the TRAFAC class translation factor GTPase superfamily. Classic translation factor GTPase family. EF-Tu/EF-1A subfamily.

Its subcellular location is the cytoplasm. Its function is as follows. This protein promotes the GTP-dependent binding of aminoacyl-tRNA to the A-site of ribosomes during protein biosynthesis. This is Elongation factor 1-alpha (EF1) from Manihot esculenta (Cassava).